Consider the following 369-residue polypeptide: Porphobilinogen deaminase, chloroplastic (369 aa).

The transit peptide at 1–46 (MEMTLYSSSSFSLPSAPSNPSLSLFTSSFRFSSFKTSPFSKCRIRA) directs the protein to the chloroplast. At Cys303 the chain carries S-(dipyrrolylmethanemethyl)cysteine.

This sequence belongs to the HMBS family. It depends on dipyrromethane as a cofactor.

It is found in the plastid. The protein localises to the chloroplast. The catalysed reaction is 4 porphobilinogen + H2O = hydroxymethylbilane + 4 NH4(+). It participates in porphyrin-containing compound metabolism; protoporphyrin-IX biosynthesis; coproporphyrinogen-III from 5-aminolevulinate: step 2/4. Its pathway is porphyrin-containing compound metabolism; chlorophyll biosynthesis. Tetrapolymerization of the monopyrrole PBG into the hydroxymethylbilane pre-uroporphyrinogen in several discrete steps. This Pisum sativum (Garden pea) protein is Porphobilinogen deaminase, chloroplastic (HEMC).